Here is a 150-residue protein sequence, read N- to C-terminus: S-protein homolog 28 (150 aa).

Asn-122 carries N-linked (GlcNAc...) asparagine glycosylation.

It belongs to the plant self-incompatibility (S1) protein family.

It is found in the secreted. The polypeptide is S-protein homolog 28 (Arabidopsis thaliana (Mouse-ear cress)).